Reading from the N-terminus, the 311-residue chain is Mediator of RNA polymerase II transcription subunit 27-B (311 aa).

It belongs to the Mediator complex subunit 27 family. In terms of assembly, component of the Mediator complex.

Its subcellular location is the nucleus. Its function is as follows. Component of the Mediator complex, a coactivator involved in the regulated transcription of nearly all RNA polymerase II-dependent genes. Mediator functions as a bridge to convey information from gene-specific regulatory proteins to the basal RNA polymerase II transcription machinery. Mediator is recruited to promoters by direct interactions with regulatory proteins and serves as a scaffold for the assembly of a functional preinitiation complex with RNA polymerase II and the general transcription factors. This chain is Mediator of RNA polymerase II transcription subunit 27-B (med27-b), found in Xenopus laevis (African clawed frog).